The chain runs to 215 residues: Orotidine 5'-phosphate decarboxylase (215 aa).

Residues aspartate 12, lysine 34, 60 to 69 (DFKVADIPNT), serine 117, 170 to 180 (PGVGAQGGSAA), glycine 193, and arginine 194 each bind substrate. The active-site Proton donor is lysine 62.

Belongs to the OMP decarboxylase family. Type 1 subfamily. In terms of assembly, homodimer.

The catalysed reaction is orotidine 5'-phosphate + H(+) = UMP + CO2. It functions in the pathway pyrimidine metabolism; UMP biosynthesis via de novo pathway; UMP from orotate: step 2/2. Functionally, catalyzes the decarboxylation of orotidine 5'-monophosphate (OMP) to uridine 5'-monophosphate (UMP). This Methanococcoides burtonii (strain DSM 6242 / NBRC 107633 / OCM 468 / ACE-M) protein is Orotidine 5'-phosphate decarboxylase.